The primary structure comprises 435 residues: MTQLEAARKGKITEEMAYVAEKEGVSPEFVREGVAAGRIVIPRNPNHKTLTDFKGIGEGLSVKVNANLGTSYDYVDVEEEVEKARVAIQYGADTVMDLSTGGDLKAIRKRILEVATVPLGTVPIYEAEFRAARRKNFFDMSADELFQVIEEHGKEGVDYITVHVGVTLKNLEVYRNSPRTTGIVSRGGGLMAAWMLHRGEENPLYARFDDLLDIARTYDMTLSLGDGLRPGSLADSTDRAQIAELLTIGELVERARRAGVQAMVEGPGHIPLNEVAANVQIQKKLTGHAPFYILGMLPVDTAAGFDHIAGAIGGALAGWWGADMLCYLTPAEHLGLPTPEHVKQGVIAFKIAAHAADVARGNKRALERNRRMSEARYRLDWEGQFALALFPEEARRLKEERGSKTKACSMCGPFCPMNLVEAVLKGKGRMELPVA.

Residues asparagine 67, methionine 96, tyrosine 125, histidine 163, 185 to 187 (SRG), 226 to 229 (DGLR), and glutamate 265 each bind substrate. Residue histidine 269 participates in Zn(2+) binding. Tyrosine 292 serves as a coordination point for substrate. Histidine 333 contributes to the Zn(2+) binding site. 3 residues coordinate [4Fe-4S] cluster: cysteine 408, cysteine 411, and cysteine 415.

The protein belongs to the ThiC family. [4Fe-4S] cluster is required as a cofactor.

It catalyses the reaction 5-amino-1-(5-phospho-beta-D-ribosyl)imidazole + S-adenosyl-L-methionine = 4-amino-2-methyl-5-(phosphooxymethyl)pyrimidine + CO + 5'-deoxyadenosine + formate + L-methionine + 3 H(+). The protein operates within cofactor biosynthesis; thiamine diphosphate biosynthesis. Functionally, catalyzes the synthesis of the hydroxymethylpyrimidine phosphate (HMP-P) moiety of thiamine from aminoimidazole ribotide (AIR) in a radical S-adenosyl-L-methionine (SAM)-dependent reaction. The chain is Phosphomethylpyrimidine synthase from Thermus thermophilus (strain ATCC 27634 / DSM 579 / HB8).